Consider the following 239-residue polypeptide: 1-(5-phosphoribosyl)-5-[(5-phosphoribosylamino)methylideneamino] imidazole-4-carboxamide isomerase (239 aa).

Asp8 (proton acceptor) is an active-site residue. Asp129 (proton donor) is an active-site residue.

Belongs to the HisA/HisF family.

It is found in the cytoplasm. The catalysed reaction is 1-(5-phospho-beta-D-ribosyl)-5-[(5-phospho-beta-D-ribosylamino)methylideneamino]imidazole-4-carboxamide = 5-[(5-phospho-1-deoxy-D-ribulos-1-ylimino)methylamino]-1-(5-phospho-beta-D-ribosyl)imidazole-4-carboxamide. Its pathway is amino-acid biosynthesis; L-histidine biosynthesis; L-histidine from 5-phospho-alpha-D-ribose 1-diphosphate: step 4/9. The chain is 1-(5-phosphoribosyl)-5-[(5-phosphoribosylamino)methylideneamino] imidazole-4-carboxamide isomerase from Bacillus cereus (strain ATCC 10987 / NRS 248).